A 494-amino-acid chain; its full sequence is Cytochrome P450 2A6 (494 aa).

Substrate contacts are provided by Phe-107 and Asn-297. Cys-439 is a binding site for heme.

This sequence belongs to the cytochrome P450 family. It depends on heme as a cofactor. Liver.

The protein localises to the endoplasmic reticulum membrane. The protein resides in the microsome membrane. It catalyses the reaction 1,4-cineole + reduced [NADPH--hemoprotein reductase] + O2 = 2-exo-hydroxy-1,4-cineole + oxidized [NADPH--hemoprotein reductase] + H2O + H(+). Functionally, exhibits a high coumarin 7-hydroxylase activity. Can act in the hydroxylation of the anti-cancer drugs cyclophosphamide and ifosphamide. Competent in the metabolic activation of aflatoxin B1. Constitutes the major nicotine C-oxidase. Acts as a 1,4-cineole 2-exo-monooxygenase. Possesses low phenacetin O-deethylation activity. The protein is Cytochrome P450 2A6 (CYP2A6) of Homo sapiens (Human).